Here is a 122-residue protein sequence, read N- to C-terminus: Large ribosomal subunit protein uL14 (122 aa).

The protein belongs to the universal ribosomal protein uL14 family. In terms of assembly, part of the 50S ribosomal subunit. Forms a cluster with proteins L3 and L19. In the 70S ribosome, L14 and L19 interact and together make contacts with the 16S rRNA in bridges B5 and B8.

Binds to 23S rRNA. Forms part of two intersubunit bridges in the 70S ribosome. The chain is Large ribosomal subunit protein uL14 from Mycobacterium ulcerans (strain Agy99).